A 328-amino-acid chain; its full sequence is MPDRGGENGASCSVGRWSAEEARAIYNLPFNDLLFRAHGLHRENFDPNRIQLSKLLNIKTGGCPEDCGYCSQSASAENGLKASKLMEIETVLEEARKAKAAGATRYCMGAAWRSPKDRDMPALTHMIESVKAMGLETCMTLGMLDSDKAEKLADAGLDYYNHNIDTSERFYPAVITTRSFEDRLDTLANVRNAGIKVCSGGILGLGEETEDRIDMLVTLANLPEPPESVPINMLIPMPGTRLAKAAPVDPLEFVRVVALARILMPKSHVRLTAGRTAMSDEMQALCFFAGANSLFMGDTLLTAANPGDDRDSSLLRRLGIQAETEQPA.

The 228-residue stretch at 48-275 (NRIQLSKLLN…KSHVRLTAGR (228 aa)) folds into the Radical SAM core domain. [4Fe-4S] cluster contacts are provided by Cys-63, Cys-67, and Cys-70. [2Fe-2S] cluster contacts are provided by Cys-107, Cys-138, Cys-198, and Arg-270.

The protein belongs to the radical SAM superfamily. Biotin synthase family. As to quaternary structure, homodimer. Requires [4Fe-4S] cluster as cofactor. [2Fe-2S] cluster is required as a cofactor.

It catalyses the reaction (4R,5S)-dethiobiotin + (sulfur carrier)-SH + 2 reduced [2Fe-2S]-[ferredoxin] + 2 S-adenosyl-L-methionine = (sulfur carrier)-H + biotin + 2 5'-deoxyadenosine + 2 L-methionine + 2 oxidized [2Fe-2S]-[ferredoxin]. It functions in the pathway cofactor biosynthesis; biotin biosynthesis; biotin from 7,8-diaminononanoate: step 2/2. Its function is as follows. Catalyzes the conversion of dethiobiotin (DTB) to biotin by the insertion of a sulfur atom into dethiobiotin via a radical-based mechanism. The chain is Biotin synthase from Brucella ovis (strain ATCC 25840 / 63/290 / NCTC 10512).